The primary structure comprises 194 residues: Ribonuclease HII (194 aa).

An RNase H type-2 domain is found at 3–193 (ILTAGVDEAG…VRNLFAQQAL (191 aa)). Aspartate 9, glutamate 10, and aspartate 101 together coordinate a divalent metal cation.

Belongs to the RNase HII family. Mn(2+) serves as cofactor. It depends on Mg(2+) as a cofactor.

It localises to the cytoplasm. The enzyme catalyses Endonucleolytic cleavage to 5'-phosphomonoester.. In terms of biological role, endonuclease that specifically degrades the RNA of RNA-DNA hybrids. The protein is Ribonuclease HII of Neisseria meningitidis serogroup C / serotype 2a (strain ATCC 700532 / DSM 15464 / FAM18).